The primary structure comprises 63 residues: Large ribosomal subunit protein uL30 (63 aa).

The protein belongs to the universal ribosomal protein uL30 family. In terms of assembly, part of the 50S ribosomal subunit.

The chain is Large ribosomal subunit protein uL30 from Methylobacterium sp. (strain 4-46).